The following is a 252-amino-acid chain: Chaplin-A (252 aa).

Residues 1 to 20 (MVAAAAATGILSLCGSPALA) form the signal peptide. The 41-residue stretch at 31-71 (SPGAVSGNALQVPVDVPVNACGNTVDVIAALNPAFGNECEN) folds into the Chaplin 1 domain. Disordered stretches follow at residues 71 to 121 (NASD…GNNA) and 150 to 224 (CEND…GSEG). Over residues 86 to 108 (EDASSSSSSSTSASSSGSHADGA) the composition is skewed to low complexity. Residues 112 to 152 (SPGVGSGNNAQVPVDVPVNLCGNTVDVIAALNPVFGNKCEN) enclose the Chaplin 2 domain. The span at 153 to 165 (DAEEPPGYGEEEP) shows a compositional bias: acidic residues. Over residues 210–224 (QTEQPPALAETGSEG) the composition is skewed to low complexity. Positions 217–221 (LAETG) match the LPXTG sorting signal motif. 2 consecutive propeptides (removed by sortase) follow at residues 219 to 252 (ETGSEGTLGAAAAGAVLIAGGAILYRRGRALSGR) and 221 to 252 (GSEGTLGAAAAGAVLIAGGAILYRRGRALSGR). Threonine 220 is subject to Pentaglycyl murein peptidoglycan amidated threonine.

Belongs to the chaplin family. Long chaplin subfamily.

It localises to the secreted. The protein localises to the cell wall. One of 8 partially redundant surface-active proteins required for efficient formation of aerial mycelium; the short chaplins assemble into a hydrophobic, amyloidal fibrillar surface layer that envelopes and protects aerial hyphae and spores, presumably anchored to the long chaplins. Chaplins have an overlapping function with the surface-active SapB peptide; chaplins are essential on minimal medium while on rich medium both chaplins and SapB are required for efficient aerial hyphae formation. A minimal chaplin strain capable of forming aerial mycelium/hyphae on minimal medium contains ChpC, ChpE and ChpH. The strain also has restored rodlet formation on the hyphae surface. A second minimal chaplin strain with ChpA, ChpD and ChpE makes slightly less robust hyphae. The long chaplins (ChpA, ChpB, ChpC) are not absolutely necessary for short chaplin localization or rodlet formation, but probably play a role in initiating aerial hyphae development. Chaplins are also involved in cell attachment to a hydrophobic surface. This chain is Chaplin-A, found in Streptomyces coelicolor (strain ATCC BAA-471 / A3(2) / M145).